The following is a 666-amino-acid chain: Asperfuranone cluster transcription factor afoA (666 aa).

A DNA-binding region (zn(2)-C6 fungal-type) is located at residues 16–43; that stretch reads CEECRRRKARCDRVRPKCGFCTENELQC. Disordered regions lie at residues 184 to 206 and 347 to 373; these read LSFDLLNETPPPPSTTTTTSTTR and AGSDRQLSPPSSSPPSSLTLSPSGENA. Residues 353–369 show a composition bias toward low complexity; that stretch reads LSPPSSSPPSSLTLSPS.

The protein resides in the nucleus. Transcription factor that regulates the expression of the gene cluster that mediates the biosynthesis of asperfuranone, a probable antitumor agent. The sequence is that of Asperfuranone cluster transcription factor afoA from Emericella nidulans (strain FGSC A4 / ATCC 38163 / CBS 112.46 / NRRL 194 / M139) (Aspergillus nidulans).